The chain runs to 449 residues: MNPNRKIITIGSICMVIGIVSLMLQIGNIISIWVSHSIQTENHHQAEPISNTNFLTEKAVASVTLAGNSSLCPISGWAIHSKDNGIRIGSKGDVFVIREPFISCSHLECRTFFLTQGALLNDKHSNGTAKDRSPHRTLMSCPVGEAPSPYNSRFESVAWSASACHDGTSWLTIAISGPDNGAVAVLKYNGIITDTIKSWRNNILRTQESECACVNGSCFTVMTDGPSNGQASYKIFKMEKGKVVKSVELDAPNYHYEECSCYPDAGEVTCVCRDNWHGSNRPWVSFNQNLEYQIGYICSGVFGDNPRPNDGTGSCGPMSLNGAYGVKGFSFKYGNGVWIGRTKSTNSRSGFEMIWDPNGWTGTDSNFSVKQDIVAITDWSGYSGSFVQHPELTGLDCIRPCFWVELIRGRPKESTIWTSGSSISFCGVNSDTVGWSWPDGAELPFTIDK.

At 1 to 6 (MNPNRK) the chain is on the intravirion side. Residues 7-27 (IITIGSICMVIGIVSLMLQIG) form a helical membrane-spanning segment. The involved in apical transport and lipid raft association stretch occupies residues 11-33 (GSICMVIGIVSLMLQIGNIISIW). The Virion surface portion of the chain corresponds to 28–449 (NIISIWVSHS…GAELPFTIDK (422 aa)). The interval 36–70 (HSIQTENHHQAEPISNTNFLTEKAVASVTLAGNSS) is hypervariable stalk region. Asn-68 carries N-linked (GlcNAc...) asparagine; by host glycosylation. Residues 71–449 (LCPISGWAIH…GAELPFTIDK (379 aa)) are head of neuraminidase. Cystine bridges form between Cys-72–Cys-397, Cys-104–Cys-109, Cys-164–Cys-211, Cys-213–Cys-218, Cys-259–Cys-272, Cys-261–Cys-270, Cys-298–Cys-315, and Cys-401–Cys-426. Position 98 (Arg-98) interacts with substrate. Asn-126 carries an N-linked (GlcNAc...) asparagine; by host glycan. The active-site Proton donor/acceptor is the Asp-131. A substrate-binding site is contributed by Arg-132. N-linked (GlcNAc...) asparagine; by host glycosylation occurs at Asn-215. 257 to 258 (EE) serves as a coordination point for substrate. Arg-273 provides a ligand contact to substrate. Positions 274, 278, and 304 each coordinate Ca(2+). Position 348 (Arg-348) interacts with substrate. Residue Asn-366 is glycosylated (N-linked (GlcNAc...) asparagine; by host). Tyr-382 (nucleophile) is an active-site residue.

The protein belongs to the glycosyl hydrolase 34 family. In terms of assembly, homotetramer. Ca(2+) serves as cofactor. Post-translationally, N-glycosylated.

It is found in the virion membrane. The protein localises to the host apical cell membrane. The enzyme catalyses Hydrolysis of alpha-(2-&gt;3)-, alpha-(2-&gt;6)-, alpha-(2-&gt;8)- glycosidic linkages of terminal sialic acid residues in oligosaccharides, glycoproteins, glycolipids, colominic acid and synthetic substrates.. Inhibited by the neuraminidase inhibitors zanamivir (Relenza) and oseltamivir (Tamiflu). These drugs interfere with the release of progeny virus from infected cells and are effective against all influenza strains. Resistance to neuraminidase inhibitors is quite rare. Functionally, catalyzes the removal of terminal sialic acid residues from viral and cellular glycoconjugates. Cleaves off the terminal sialic acids on the glycosylated HA during virus budding to facilitate virus release. Additionally helps virus spread through the circulation by further removing sialic acids from the cell surface. These cleavages prevent self-aggregation and ensure the efficient spread of the progeny virus from cell to cell. Otherwise, infection would be limited to one round of replication. Described as a receptor-destroying enzyme because it cleaves a terminal sialic acid from the cellular receptors. May facilitate viral invasion of the upper airways by cleaving the sialic acid moieties on the mucin of the airway epithelial cells. Likely to plays a role in the budding process through its association with lipid rafts during intracellular transport. May additionally display a raft-association independent effect on budding. Plays a role in the determination of host range restriction on replication and virulence. Sialidase activity in late endosome/lysosome traffic seems to enhance virus replication. This chain is Neuraminidase, found in Influenza A virus (strain A/Chicken/Hong Kong/37.4/2002 H5N1 genotype X2).